We begin with the raw amino-acid sequence, 629 residues long: Coiled-coil domain-containing protein 120 (629 aa).

The tract at residues 31–70 (RLRGLLDRQRALQEALSVKLQELRKVCLQEAELTGQLPPE) is involved in CYTH2-binding. Residues 109 to 173 (ELALEALERE…LRDFRARLGL (65 aa)) are a coiled coil. Composition is skewed to low complexity over residues 209 to 219 (HSESSSLSESG) and 279 to 294 (ASPT…SASS). Positions 209–356 (HSESSSLSES…LFAARTRRSN (148 aa)) are disordered. The span at 323–332 (RQWSGSQDSQ) shows a compositional bias: polar residues. Phosphoserine is present on residues S355 and S357. Disordered stretches follow at residues 399 to 432 (QPVP…GAPR) and 602 to 629 (PSQA…FTDG). Residues 418–432 (ARPSSAAPASRGAPR) show a composition bias toward low complexity. At R432 the chain carries Omega-N-methylarginine.

In terms of assembly, interacts with NIN and CEP170; leading to recruit them to centrosomes. Interacts with CYTH2; this interaction is direct and stabilizes CCDC120, possibly by preventing ubiquitination. Ubiquitinated; interaction with CYTH2 may prevent ubiquitination.

It is found in the cytoplasm. The protein resides in the cytoskeleton. The protein localises to the microtubule organizing center. Its subcellular location is the centrosome. It localises to the centriole. It is found in the cell projection. The protein resides in the neuron projection. The protein localises to the growth cone. Its subcellular location is the endosome. Centriolar protein required for centriole subdistal appendage assembly and microtubule anchoring in interphase cells. Together with CCDC68, cooperate with subdistal appendage components ODF2, NIN and CEP170 for hierarchical subdistal appendage assembly. Recruits NIN and CEP170 to centrosomes. Also required for neurite growth. Localizes CYTH2 to vesicles to allow its transport along neurites, and subsequent ARF6 activation and neurite growth. The chain is Coiled-coil domain-containing protein 120 from Mus musculus (Mouse).